Consider the following 317-residue polypeptide: Acetyl-coenzyme A carboxylase carboxyl transferase subunit alpha (317 aa).

A CoA carboxyltransferase C-terminal domain is found at Lys-39–Ala-293.

This sequence belongs to the AccA family. As to quaternary structure, acetyl-CoA carboxylase is a heterohexamer composed of biotin carboxyl carrier protein (AccB), biotin carboxylase (AccC) and two subunits each of ACCase subunit alpha (AccA) and ACCase subunit beta (AccD).

The protein localises to the cytoplasm. The catalysed reaction is N(6)-carboxybiotinyl-L-lysyl-[protein] + acetyl-CoA = N(6)-biotinyl-L-lysyl-[protein] + malonyl-CoA. It participates in lipid metabolism; malonyl-CoA biosynthesis; malonyl-CoA from acetyl-CoA: step 1/1. In terms of biological role, component of the acetyl coenzyme A carboxylase (ACC) complex. First, biotin carboxylase catalyzes the carboxylation of biotin on its carrier protein (BCCP) and then the CO(2) group is transferred by the carboxyltransferase to acetyl-CoA to form malonyl-CoA. The chain is Acetyl-coenzyme A carboxylase carboxyl transferase subunit alpha from Beijerinckia indica subsp. indica (strain ATCC 9039 / DSM 1715 / NCIMB 8712).